The following is a 419-amino-acid chain: UDP-N-acetylglucosamine 1-carboxyvinyltransferase (419 aa).

A phosphoenolpyruvate-binding site is contributed by 22–23 (KN). A UDP-N-acetyl-alpha-D-glucosamine-binding site is contributed by arginine 91. The active-site Proton donor is cysteine 115. 2-(S-cysteinyl)pyruvic acid O-phosphothioketal is present on cysteine 115. Residues 120-124 (RPVDL), 160-163 (KVSV), aspartate 305, and isoleucine 327 contribute to the UDP-N-acetyl-alpha-D-glucosamine site.

The protein belongs to the EPSP synthase family. MurA subfamily.

The protein resides in the cytoplasm. It carries out the reaction phosphoenolpyruvate + UDP-N-acetyl-alpha-D-glucosamine = UDP-N-acetyl-3-O-(1-carboxyvinyl)-alpha-D-glucosamine + phosphate. It functions in the pathway cell wall biogenesis; peptidoglycan biosynthesis. Cell wall formation. Adds enolpyruvyl to UDP-N-acetylglucosamine. The sequence is that of UDP-N-acetylglucosamine 1-carboxyvinyltransferase from Sodalis glossinidius (strain morsitans).